A 119-amino-acid polypeptide reads, in one-letter code: Large ribosomal subunit protein bL20 (119 aa).

The protein belongs to the bacterial ribosomal protein bL20 family.

Functionally, binds directly to 23S ribosomal RNA and is necessary for the in vitro assembly process of the 50S ribosomal subunit. It is not involved in the protein synthesizing functions of that subunit. This chain is Large ribosomal subunit protein bL20, found in Buchnera aphidicola subsp. Cinara cedri (strain Cc).